The sequence spans 1017 residues: Multiple C2 domain and transmembrane region protein 14 (1017 aa).

Residues 1 to 110 enclose the C2 1 domain; sequence MADNVLRKLI…ASAGSETLVY (110 aa). Residues 139–231 are disordered; sequence AAPAATEPKP…PAEVKNPPIP (93 aa). Low complexity predominate over residues 141–153; it reads PAATEPKPEAAAA. The segment covering 154 to 213 has biased composition (basic and acidic residues); it reads TEEKPPEIAKAEDGKKETEAAKTEEKKEGDKKEEEKPKEEAKPDEKKPDAPPDTKAKKPD. Positions 217–231 are enriched in pro residues; sequence APPPPPAEVKNPPIP. C2 domains follow at residues 258–387, 420–554, and 587–714; these read DLEL…PQWY, DSGG…SRWF, and VTSD…LNSY. Ca(2+) is bound by residues Asp296, Asn299, Asp352, Thr355, and Glu359. 2 helical membrane-spanning segments follow: residues 851-871 and 957-977; these read VAIVLCPHLVLPTVFMYAFLI and ATCIFVVFCLFASFLFYIVPF.

Belongs to the MCTP family. Ca(2+) is required as a cofactor. Expressed in incipient leaf primordia and in roots meristems. Observed in flowers.

It localises to the membrane. Its subcellular location is the vesicle. The protein localises to the golgi apparatus membrane. Functionally, may function as a signaling molecule by regulating the trafficking of other regulators. This is Multiple C2 domain and transmembrane region protein 14 from Arabidopsis thaliana (Mouse-ear cress).